The following is a 1079-amino-acid chain: Translation initiation factor IF-2 (1079 aa).

Composition is skewed to basic and acidic residues over residues 52–65, 75–90, and 102–134; these read VQAQRDGGARKEGN, RDGDRASARAEAKAPE, and APERAEEADKPAVAKPAKAPETEAHARARKEPQ. A disordered region spans residues 52–488; sequence VQAQRDGGAR…RGKKDVRPAA (437 aa). The segment covering 150 to 184 has biased composition (low complexity); it reads APVAKVVEAAPAETPAPEAPAVKATVTAEAAPAKT. Residues 185–194 show a composition bias toward basic and acidic residues; it reads VEPESERPQA. A compositionally biased stretch (low complexity) spans 276–291; the sequence is AAVAQQQMQQQAAQQQ. A compositionally biased stretch (basic and acidic residues) spans 306–327; the sequence is GGYRPEGQREGGYRPEGQREGG. 2 stretches are compositionally biased toward low complexity: residues 348-370 and 380-398; these read EGGYRPGAPRPEGGYRPAGGPRP and PGAPRPEGGYRPAGGAPRP. The span at 419-429 shows a compositional bias: gly residues; the sequence is PRPGGFGGAPG. Positions 461–471 are enriched in basic and acidic residues; it reads PRGRSDDDVMR. The span at 473–482 shows a compositional bias: basic residues; the sequence is PRGRGKRGKK. In terms of domain architecture, tr-type G spans 578–745; that stretch reads TRPPVVTIMG…LIAIQAEILE (168 aa). The segment at 587 to 594 is G1; the sequence is GHVDHGKT. 587 to 594 contacts GTP; it reads GHVDHGKT. The segment at 612–616 is G2; the sequence is GITQH. The tract at residues 633–636 is G3; the sequence is DTPG. Residues 633–637 and 687–690 contribute to the GTP site; these read DTPGH and NKMD. Positions 687–690 are G4; that stretch reads NKMD. The tract at residues 723–725 is G5; sequence SAK.

Belongs to the TRAFAC class translation factor GTPase superfamily. Classic translation factor GTPase family. IF-2 subfamily.

It localises to the cytoplasm. Its function is as follows. One of the essential components for the initiation of protein synthesis. Protects formylmethionyl-tRNA from spontaneous hydrolysis and promotes its binding to the 30S ribosomal subunits. Also involved in the hydrolysis of GTP during the formation of the 70S ribosomal complex. The protein is Translation initiation factor IF-2 of Nitratidesulfovibrio vulgaris (strain ATCC 29579 / DSM 644 / CCUG 34227 / NCIMB 8303 / VKM B-1760 / Hildenborough) (Desulfovibrio vulgaris).